We begin with the raw amino-acid sequence, 1697 residues long: Histone acetyltransferase HAC1 (1697 aa).

A compositionally biased stretch (polar residues) spans methionine 1–threonine 16. 6 disordered regions span residues methionine 1–serine 45, serine 202–threonine 221, serine 385–arginine 439, histidine 555–arginine 574, arginine 583–aspartate 631, and isoleucine 843–glutamate 901. 2 stretches are compositionally biased toward low complexity: residues methionine 17–asparagine 28 and serine 202–serine 217. The span at serine 385–histidine 398 shows a compositional bias: polar residues. The segment covering glutamine 399–arginine 439 has biased composition (low complexity). 2 stretches are compositionally biased toward polar residues: residues tryptophan 556 to serine 571 and methionine 584 to glycine 628. The segment at asparagine 629–valine 709 adopts a TAZ-type 1 zinc-finger fold. Over residues threonine 873–glutamate 901 the composition is skewed to basic and acidic residues. Residues histidine 989–alanine 1066 form a PHD-type zinc finger. Positions valine 1081–alanine 1517 constitute a CBP/p300-type HAT domain. Acetyl-CoA is bound by residues leucine 1204–serine 1206, arginine 1223–threonine 1224, and tryptophan 1279. 2 consecutive ZZ-type zinc fingers follow at residues histidine 1399 to isoleucine 1462 and alanine 1519 to aspartate 1572. Zn(2+) contacts are provided by cysteine 1404, cysteine 1407, cysteine 1419, cysteine 1422, cysteine 1428, cysteine 1431, histidine 1444, histidine 1452, cysteine 1524, cysteine 1527, cysteine 1539, cysteine 1542, cysteine 1548, cysteine 1551, histidine 1560, and histidine 1562. A TAZ-type 2 zinc finger spans residues glutamate 1579 to leucine 1662.

Rosette leaves, stems and flowers.

Its subcellular location is the nucleus. It carries out the reaction L-lysyl-[protein] + acetyl-CoA = N(6)-acetyl-L-lysyl-[protein] + CoA + H(+). Functionally, acetyltransferase enzyme. Acetylates histones, giving a specific tag for transcriptional activation. The chain is Histone acetyltransferase HAC1 (HAC1) from Arabidopsis thaliana (Mouse-ear cress).